The primary structure comprises 96 residues: Small ribosomal subunit protein bS6c (96 aa).

The protein belongs to the bacterial ribosomal protein bS6 family.

The protein resides in the plastid. Its subcellular location is the chloroplast. Its function is as follows. Binds together with bS18 to 16S ribosomal RNA. The chain is Small ribosomal subunit protein bS6c (rps6) from Trieres chinensis (Marine centric diatom).